Reading from the N-terminus, the 361-residue chain is Probable dual-specificity RNA methyltransferase RlmN (361 aa).

The Proton acceptor role is filled by Glu-104. In terms of domain architecture, Radical SAM core spans 110 to 343 (HEYGNSVCVT…VTIRREQGHD (234 aa)). A disulfide bridge connects residues Cys-117 and Cys-348. 3 residues coordinate [4Fe-4S] cluster: Cys-124, Cys-128, and Cys-131. S-adenosyl-L-methionine is bound by residues 174-175 (GE), Ser-206, 229-231 (SLH), and Asn-305. The S-methylcysteine intermediate role is filled by Cys-348.

Belongs to the radical SAM superfamily. RlmN family. The cofactor is [4Fe-4S] cluster.

It localises to the cytoplasm. It catalyses the reaction adenosine(2503) in 23S rRNA + 2 reduced [2Fe-2S]-[ferredoxin] + 2 S-adenosyl-L-methionine = 2-methyladenosine(2503) in 23S rRNA + 5'-deoxyadenosine + L-methionine + 2 oxidized [2Fe-2S]-[ferredoxin] + S-adenosyl-L-homocysteine. It carries out the reaction adenosine(37) in tRNA + 2 reduced [2Fe-2S]-[ferredoxin] + 2 S-adenosyl-L-methionine = 2-methyladenosine(37) in tRNA + 5'-deoxyadenosine + L-methionine + 2 oxidized [2Fe-2S]-[ferredoxin] + S-adenosyl-L-homocysteine. In terms of biological role, specifically methylates position 2 of adenine 2503 in 23S rRNA and position 2 of adenine 37 in tRNAs. The sequence is that of Probable dual-specificity RNA methyltransferase RlmN from Bacillus licheniformis (strain ATCC 14580 / DSM 13 / JCM 2505 / CCUG 7422 / NBRC 12200 / NCIMB 9375 / NCTC 10341 / NRRL NRS-1264 / Gibson 46).